The following is a 103-amino-acid chain: Histone H4 (103 aa).

The span at 1-14 (MTGRGKGGKGLGKG) shows a compositional bias: gly residues. The tract at residues 1–20 (MTGRGKGGKGLGKGGAKRHR) is disordered. Residues K6 and K13 each carry the N6-acetyl-N6-methyllysine; alternate modification. A DNA-binding region spans residues 17–21 (KRHRK).

This sequence belongs to the histone H4 family. As to quaternary structure, the nucleosome is a histone octamer containing two molecules each of H2A, H2B, H3 and H4 assembled in one H3-H4 heterotetramer and two H2A-H2B heterodimers. The octamer wraps approximately 147 bp of DNA.

Its subcellular location is the nucleus. The protein localises to the chromosome. Its function is as follows. Core component of nucleosome. Nucleosomes wrap and compact DNA into chromatin, limiting DNA accessibility to the cellular machineries which require DNA as a template. Histones thereby play a central role in transcription regulation, DNA repair, DNA replication and chromosomal stability. DNA accessibility is regulated via a complex set of post-translational modifications of histones, also called histone code, and nucleosome remodeling. The protein is Histone H4 of Diadromus pulchellus (Parasitic wasp).